Reading from the N-terminus, the 407-residue chain is Probable NADPH dehydrogenase (407 aa).

The FMN site is built by T49 and Q124. Residue 201-204 participates in substrate binding; that stretch reads HGAH. Y206 acts as the Proton donor in catalysis. Positions 254 and 357 each coordinate FMN.

It belongs to the NADH:flavin oxidoreductase/NADH oxidase family. FMN is required as a cofactor.

The catalysed reaction is A + NADPH + H(+) = AH2 + NADP(+). Functionally, oxidoreductase that binds mammalian estrogens with high affinity. In Candida albicans (Yeast), this protein is Probable NADPH dehydrogenase.